A 641-amino-acid polypeptide reads, in one-letter code: Anthrax toxin receptor-like (641 aa).

An N-terminal signal peptide occupies residues 1 to 27; the sequence is MMSHSPSMPCSALFLLLLLLLPPTFKG. Over 28–363 the chain is Extracellular; that stretch reads GSLRYHGPGW…ASQGIVFKRT (336 aa). The VWFA domain occupies 76–247; it reads DLYLVLDKSG…SALEGVVDPL (172 aa). Ser84, Ser86, and Thr150 together coordinate a divalent metal cation. Residues 364–384 traverse the membrane as a helical segment; that stretch reads WLMFLPVLLVTLLLLCCTWKL. At 385–641 the chain is on the cytoplasmic side; the sequence is CIKPKKLPPP…FPPISKGPKF (257 aa). Residues 391–455 are disordered; the sequence is LPPPPPKPEK…ARPPPAPLPA (65 aa). A compositionally biased stretch (pro residues) spans 407–436; it reads PPPSSPPAPGRGPGPGPSAGPGPGPGPSPG.

This sequence belongs to the ATR family.

It localises to the membrane. In Mus musculus (Mouse), this protein is Anthrax toxin receptor-like (Antxrl).